The chain runs to 183 residues: NADH-ubiquinone oxidoreductase chain 5 (183 aa).

The next 4 helical transmembrane spans lie at 7–27 (FMCY…GDNS), 30–50 (LFLG…FWFT), 111–131 (AITL…AQIG), and 144–164 (TPVS…FMIA).

This sequence belongs to the complex I subunit 5 family.

The protein localises to the mitochondrion inner membrane. It carries out the reaction a ubiquinone + NADH + 5 H(+)(in) = a ubiquinol + NAD(+) + 4 H(+)(out). Core subunit of the mitochondrial membrane respiratory chain NADH dehydrogenase (Complex I) that is believed to belong to the minimal assembly required for catalysis. Complex I functions in the transfer of electrons from NADH to the respiratory chain. The immediate electron acceptor for the enzyme is believed to be ubiquinone. The sequence is that of NADH-ubiquinone oxidoreductase chain 5 (NDH5) from Pisum sativum (Garden pea).